The primary structure comprises 591 residues: Cytidine monophosphate-N-acetylneuraminic acid hydroxylase (591 aa).

Positions 16–114 (LASAEVESLK…IENDDENGVS (99 aa)) constitute a Rieske domain. Residues Cys-56, His-58, Cys-77, and His-80 each coordinate [2Fe-2S] cluster.

The protein belongs to the CMP-Neu5Ac hydroxylase family. The cofactor is [2Fe-2S] cluster.

Its subcellular location is the cytoplasm. The catalysed reaction is CMP-N-acetyl-beta-neuraminate + 2 Fe(II)-[cytochrome b5] + O2 + 2 H(+) = CMP-N-glycoloyl-beta-neuraminate + 2 Fe(III)-[cytochrome b5] + H2O. It functions in the pathway amino-sugar metabolism; N-acetylneuraminate metabolism. In terms of biological role, sialic acids are components of carbohydrate chains of glycoconjugates and are involved in cell-cell recognition and cell-pathogen interactions. Catalyzes the conversion of CMP-N-acetylneuraminic acid (CMP-Neu5Ac) into its hydroxylated derivative CMP-N-glycolylneuraminic acid (CMP-Neu5Gc), a sialic acid abundantly expressed at the surface of many cells. The protein is Cytidine monophosphate-N-acetylneuraminic acid hydroxylase (cmah) of Xenopus laevis (African clawed frog).